A 759-amino-acid chain; its full sequence is Inhibitor of nuclear factor kappa-B kinase subunit alpha (759 aa).

A disordered region spans residues 1–20; the sequence is MERGAERGPPPAPGGVALRG. The Protein kinase domain occupies 29 to 316; the sequence is WEMRDRLGTG…PETNSPKCFL (288 aa). ATP-binding positions include 35–43 and Lys-58; that span reads LGTGGFGNV. Asp-158 serves as the catalytic Proton acceptor. The tract at residues 469 to 490 is leucine-zipper; that stretch reads LLRYNANLIKMKNNMVSASQQL. Polar residues predominate over residues 691-703; it reads TPAATWVPQSSSE. A disordered region spans residues 691-715; the sequence is TPAATWVPQSSSEYAPHPLSSMATP. An NEMO-binding region spans residues 753–758; the sequence is FDWSWL.

Belongs to the protein kinase superfamily. Ser/Thr protein kinase family. I-kappa-B kinase subfamily.

The protein localises to the cytoplasm. It localises to the nucleus. It catalyses the reaction L-seryl-[I-kappa-B protein] + ATP = O-phospho-L-seryl-[I-kappa-B protein] + ADP + H(+). Activated when phosphorylated and inactivated when dephosphorylated. Functionally, phosphorylates inhibitors of NF-kappa-B thus leading to the dissociation of the inhibitor/NF-kappa-B complex and ultimately the degradation of the inhibitor. Phosphorylates 'Ser-10' of histone H3 at NF-kappa-B-regulated promoters during inflammatory responses triggered by cytokines. This chain is Inhibitor of nuclear factor kappa-B kinase subunit alpha (CHUK), found in Gallus gallus (Chicken).